We begin with the raw amino-acid sequence, 502 residues long: Protein IWS1 homolog 1 (502 aa).

Over residues 1–12 the composition is skewed to basic and acidic residues; the sequence is MGFEDDPYRDVD. Disordered regions lie at residues 1–61 and 87–208; these read MGFE…DNDK and DEDV…DEDE. Composition is skewed to acidic residues over residues 13–22, 34–49, and 87–97; these read GEPIVDFDDF, QDFDEDLADDIGDWDG, and DEDVDDAEFDE. Composition is skewed to basic and acidic residues over residues 138–151 and 181–194; these read NRGERKSEEIDEMW and PSERYGGDAGDRSP. Tyrosine 185 carries the phosphotyrosine modification. In terms of domain architecture, TFIIS N-terminal spans 287–370; it reads TLLKNWLEPL…DKWSRPIFNK (84 aa). Positions 385–434 are disordered; sequence VPYRRPPVKKPSNKATMESRDGDFDLEIRERKTGLTSGQSSRGDRQMTMR. Over residues 401 to 417 the composition is skewed to basic and acidic residues; the sequence is MESRDGDFDLEIRERKT.

It belongs to the IWS1 family. In terms of assembly, interacts with BZR2/BES1 and SPT6 (via N-terminus). Interacts with ASHH2/SDG8.

It is found in the nucleus. Functionally, transcription factor involved in RNA polymerase II (RNAPII) transcription regulation. Involved in transcription elongation. May function at post-recruitment and elongation steps of transcription. May be recruited by BZR2/BES1 to target genes and promote their expression during transcription elongation process. Required for brassinosteroid (BR)-induced gene expression. Required the for regulation of numerous nitrogen-responsive genes in roots. Acts in roots to repress NRT2.1 transcription in response to high nitrogen supply. This repression is associated with an IWS1-dependent increase of trimethylation on 'Lys-27' H3K27me3 at the NRT2.1 locus. The sequence is that of Protein IWS1 homolog 1 from Arabidopsis thaliana (Mouse-ear cress).